We begin with the raw amino-acid sequence, 67 residues long: Protein AaeX (67 aa).

2 consecutive transmembrane segments (helical) span residues 3–23 (LFPVIVVFGLSFPPIFFKLLL) and 43–63 (FVWHPALFNTALYCCLFYLIS).

Belongs to the AaeX family.

The protein localises to the cell membrane. The chain is Protein AaeX from Salmonella gallinarum (strain 287/91 / NCTC 13346).